Reading from the N-terminus, the 439-residue chain is tRNA modification GTPase MnmE (439 aa).

Residues Arg-24, Glu-81, and Lys-121 each coordinate (6S)-5-formyl-5,6,7,8-tetrahydrofolate. The 146-residue stretch at 218-363 (GFKVVIAGAP…LRRLIGDIVE (146 aa)) folds into the TrmE-type G domain. Asn-228 serves as a coordination point for K(+). Residues 228–233 (NAGKSS), 247–253 (TEIAGTT), and 272–275 (DTAG) contribute to the GTP site. Ser-232 contacts Mg(2+). Thr-247, Ile-249, and Thr-252 together coordinate K(+). A Mg(2+)-binding site is contributed by Thr-253. Lys-439 provides a ligand contact to (6S)-5-formyl-5,6,7,8-tetrahydrofolate.

It belongs to the TRAFAC class TrmE-Era-EngA-EngB-Septin-like GTPase superfamily. TrmE GTPase family. As to quaternary structure, homodimer. Heterotetramer of two MnmE and two MnmG subunits. K(+) serves as cofactor.

It localises to the cytoplasm. Exhibits a very high intrinsic GTPase hydrolysis rate. Involved in the addition of a carboxymethylaminomethyl (cmnm) group at the wobble position (U34) of certain tRNAs, forming tRNA-cmnm(5)s(2)U34. The protein is tRNA modification GTPase MnmE of Rhizobium johnstonii (strain DSM 114642 / LMG 32736 / 3841) (Rhizobium leguminosarum bv. viciae).